We begin with the raw amino-acid sequence, 286 residues long: Ribosomal RNA small subunit methyltransferase A (286 aa).

The S-adenosyl-L-methionine site is built by Asn31, Ile33, Gly58, Glu80, Asp106, and Asn125.

Belongs to the class I-like SAM-binding methyltransferase superfamily. rRNA adenine N(6)-methyltransferase family. RsmA subfamily.

It is found in the cytoplasm. The catalysed reaction is adenosine(1518)/adenosine(1519) in 16S rRNA + 4 S-adenosyl-L-methionine = N(6)-dimethyladenosine(1518)/N(6)-dimethyladenosine(1519) in 16S rRNA + 4 S-adenosyl-L-homocysteine + 4 H(+). Its function is as follows. Specifically dimethylates two adjacent adenosines (A1518 and A1519) in the loop of a conserved hairpin near the 3'-end of 16S rRNA in the 30S particle. May play a critical role in biogenesis of 30S subunits. In Wolbachia pipientis wMel, this protein is Ribosomal RNA small subunit methyltransferase A.